We begin with the raw amino-acid sequence, 348 residues long: Protein RecA (348 aa).

69-76 (GPESSGKT) lines the ATP pocket.

This sequence belongs to the RecA family.

The protein localises to the cytoplasm. Functionally, can catalyze the hydrolysis of ATP in the presence of single-stranded DNA, the ATP-dependent uptake of single-stranded DNA by duplex DNA, and the ATP-dependent hybridization of homologous single-stranded DNAs. It interacts with LexA causing its activation and leading to its autocatalytic cleavage. This Picosynechococcus sp. (strain ATCC 27264 / PCC 7002 / PR-6) (Agmenellum quadruplicatum) protein is Protein RecA.